We begin with the raw amino-acid sequence, 241 residues long: Endo-chitosanase B (241 aa).

Residues 1-17 form the signal peptide; the sequence is MRLSEILAVALVTGATA. Asn86 carries N-linked (GlcNAc...) asparagine glycosylation.

Belongs to the glycosyl hydrolase 75 family.

Its subcellular location is the secreted. It carries out the reaction Endohydrolysis of beta-(1-&gt;4)-linkages between D-glucosamine residues in a partly acetylated chitosan.. In terms of biological role, chitosanase catalyzing the endo-type cleavage of chitosan, the deacylated form of chitin. Chitosanase may be crucial in the degradation of the deacetylated portion of chitin in the fungal cell wall. Chitoolisaccharides produced by the hydrolysis of partially N-acetylated chitosan are known to have many biological activities, including antibacterial activity, immune-enhancing effects, and elicitor activity. This Aspergillus oryzae (strain ATCC 42149 / RIB 40) (Yellow koji mold) protein is Endo-chitosanase B (csnB).